Here is a 295-residue protein sequence, read N- to C-terminus: Elongation factor Ts (295 aa).

Residues 79–82 (TDFV) are involved in Mg(2+) ion dislocation from EF-Tu.

This sequence belongs to the EF-Ts family.

The protein localises to the cytoplasm. Its function is as follows. Associates with the EF-Tu.GDP complex and induces the exchange of GDP to GTP. It remains bound to the aminoacyl-tRNA.EF-Tu.GTP complex up to the GTP hydrolysis stage on the ribosome. In Bacillus cereus (strain G9842), this protein is Elongation factor Ts.